The chain runs to 691 residues: Alpha-1,4-glucan:maltose-1-phosphate maltosyltransferase (691 aa).

3 residues coordinate alpha-maltose 1-phosphate: Lys-280, Gln-341, and Asp-376. Asp-411 (nucleophile) is an active-site residue. Asn-412 contributes to the alpha-maltose 1-phosphate binding site. Glu-440 acts as the Proton donor in catalysis. Residue 550–551 (KY) participates in alpha-maltose 1-phosphate binding.

This sequence belongs to the glycosyl hydrolase 13 family. GlgE subfamily. As to quaternary structure, homodimer.

It carries out the reaction alpha-maltose 1-phosphate + [(1-&gt;4)-alpha-D-glucosyl](n) = [(1-&gt;4)-alpha-D-glucosyl](n+2) + phosphate. Functionally, maltosyltransferase that uses maltose 1-phosphate (M1P) as the sugar donor to elongate linear or branched alpha-(1-&gt;4)-glucans. Is involved in a branched alpha-glucan biosynthetic pathway from trehalose, together with TreS, Mak and GlgB. This chain is Alpha-1,4-glucan:maltose-1-phosphate maltosyltransferase, found in Arcanobacterium haemolyticum (strain ATCC 9345 / DSM 20595 / CCM 5947 / CCUG 17215 / LMG 16163 / NBRC 15585 / NCTC 8452 / 11018).